Reading from the N-terminus, the 162-residue chain is Photosystem II extrinsic protein V (162 aa).

The N-terminal stretch at 1–25 is a signal peptide; sequence MFKKFSALFTLLFTLCLVNPMLVYS. Positions 62, 65, 66, and 117 each coordinate heme c.

This sequence belongs to the cytochrome c family. PsbV subfamily. PSII is composed of 1 copy each of membrane proteins PsbA, PsbB, PsbC, PsbD, PsbE, PsbF, PsbH, PsbI, PsbJ, PsbK, PsbL, PsbM, PsbT, PsbX, PsbY, PsbZ, Psb30/Ycf12, at least 3 peripheral proteins of the oxygen-evolving complex and a large number of cofactors. It forms dimeric complexes. It depends on heme c as a cofactor.

It localises to the plastid. The protein localises to the chloroplast thylakoid membrane. In terms of biological role, one of the extrinsic, lumenal subunits of photosystem II (PSII). PSII is a light-driven water plastoquinone oxidoreductase, using light energy to abstract electrons from H(2)O, generating a proton gradient subsequently used for ATP formation. The extrinsic proteins stabilize the structure of photosystem II oxygen-evolving complex (OEC), the ion environment of oxygen evolution and protect the OEC against heat-induced inactivation. The protein is Photosystem II extrinsic protein V of Guillardia theta (Cryptophyte).